Reading from the N-terminus, the 369-residue chain is MRAALEEYNQKVGPNNNNQSNTINLPPVGSNSNNINDNNNNSIQRKRGATVIGTREFHVPSDLKNHHNPYHSNYNNNNNNNNNSSSAITSGTVAPSSSMNNHQKEDDSYTSLKMRYLRSLNISIKQEAPTKDTNVSASAPIPIPIALSMGRGDLDSESDISEKEDDNDGSFDGNSSGNSFLKHNTIANSYLSGNQFKNNLNSYAGNGINSMNSLSSHFNNNNNSSNNNNNNNPNNNNNNNNNNNNNNNNNNNNNNNNNNNNNNNNNNNPNNNKNNNNNNGSNIINNSSNISKNNGFIMKSNSSNNIDNNNNNNNNNNNNNSNIYNKEDDEEQFDLDTSTTPPRKDSKGKGKHKFIPPHELLGAAGGDDD.

4 disordered regions span residues 1 to 42, 60 to 107, 146 to 177, and 214 to 369; these read MRAA…NNNS, PSDL…KEDD, ALSMGRGDLDSESDISEKEDDNDGSFDGNSSG, and LSSH…GDDD. Over residues 12-24 the composition is skewed to polar residues; sequence VGPNNNNQSNTIN. 2 stretches are compositionally biased toward low complexity: residues 30-42 and 70-86; these read SNSNNINDNNNNS and YHSNYNNNNNNNNNSSS. Positions 87-101 are enriched in polar residues; sequence AITSGTVAPSSSMNN. A compositionally biased stretch (acidic residues) spans 155-169; the sequence is DSESDISEKEDDNDG. Positions 219 to 324 are enriched in low complexity; that stretch reads NNNNNSSNNN…NNNNNNSNIY (106 aa).

This is an uncharacterized protein from Dictyostelium discoideum (Social amoeba).